A 134-amino-acid chain; its full sequence is S-protein homolog 18 (134 aa).

Residues 1-25 form the signal peptide; the sequence is MCPSSFRLILSVILIAFLFVGLCEA. An N-linked (GlcNAc...) asparagine glycan is attached at Asn87.

The protein belongs to the plant self-incompatibility (S1) protein family.

Its subcellular location is the secreted. This Arabidopsis thaliana (Mouse-ear cress) protein is S-protein homolog 18.